The sequence spans 499 residues: Glutamate--tRNA ligase (499 aa).

Positions 12-22 match the 'HIGH' region motif; sequence PSPTGHLHIGN. The 'KMSKS' region signature appears at 259–263; it reads KLSKR. Lysine 262 is an ATP binding site.

Belongs to the class-I aminoacyl-tRNA synthetase family. Glutamate--tRNA ligase type 1 subfamily. In terms of assembly, monomer.

The protein localises to the cytoplasm. It carries out the reaction tRNA(Glu) + L-glutamate + ATP = L-glutamyl-tRNA(Glu) + AMP + diphosphate. Catalyzes the attachment of glutamate to tRNA(Glu) in a two-step reaction: glutamate is first activated by ATP to form Glu-AMP and then transferred to the acceptor end of tRNA(Glu). This Lactobacillus johnsonii (strain CNCM I-12250 / La1 / NCC 533) protein is Glutamate--tRNA ligase.